The following is a 314-amino-acid chain: Small ribosomal subunit biogenesis GTPase RsgA (314 aa).

The segment at 1–21 (MKRAPTKQPAKPAARGGERAQ) is disordered. Positions 85-246 (SDQFKSKLFA…LIDSPGFQEF (162 aa)) constitute a CP-type G domain. GTP contacts are provided by residues 134–137 (NKID) and 188–196 (GQSGMGKST). Positions 270, 275, 277, and 283 each coordinate Zn(2+).

This sequence belongs to the TRAFAC class YlqF/YawG GTPase family. RsgA subfamily. Monomer. Associates with 30S ribosomal subunit, binds 16S rRNA. Zn(2+) serves as cofactor.

Its subcellular location is the cytoplasm. Its function is as follows. One of several proteins that assist in the late maturation steps of the functional core of the 30S ribosomal subunit. Helps release RbfA from mature subunits. May play a role in the assembly of ribosomal proteins into the subunit. Circularly permuted GTPase that catalyzes slow GTP hydrolysis, GTPase activity is stimulated by the 30S ribosomal subunit. The chain is Small ribosomal subunit biogenesis GTPase RsgA from Burkholderia pseudomallei (strain 1106a).